Consider the following 164-residue polypeptide: Phosphopantetheine adenylyltransferase (164 aa).

Thr10 is a substrate binding site. ATP-binding positions include 10-11 and His18; that span reads TF. Residues Lys42, Leu74, and Arg88 each coordinate substrate. Residues 89–91, Glu99, and 124–130 each bind ATP; these read GIR and NSFISST.

It belongs to the bacterial CoaD family. In terms of assembly, homohexamer. Mg(2+) serves as cofactor.

The protein resides in the cytoplasm. It carries out the reaction (R)-4'-phosphopantetheine + ATP + H(+) = 3'-dephospho-CoA + diphosphate. It participates in cofactor biosynthesis; coenzyme A biosynthesis; CoA from (R)-pantothenate: step 4/5. In terms of biological role, reversibly transfers an adenylyl group from ATP to 4'-phosphopantetheine, yielding dephospho-CoA (dPCoA) and pyrophosphate. This is Phosphopantetheine adenylyltransferase from Pseudoalteromonas translucida (strain TAC 125).